Reading from the N-terminus, the 137-residue chain is Large ribosomal subunit protein uL16 (137 aa).

This sequence belongs to the universal ribosomal protein uL16 family. In terms of assembly, part of the 50S ribosomal subunit.

Binds 23S rRNA and is also seen to make contacts with the A and possibly P site tRNAs. This chain is Large ribosomal subunit protein uL16, found in Rhodopseudomonas palustris (strain ATCC BAA-98 / CGA009).